Reading from the N-terminus, the 496-residue chain is Proline--tRNA ligase (496 aa).

It belongs to the class-II aminoacyl-tRNA synthetase family. ProS type 3 subfamily. In terms of assembly, homodimer.

The protein localises to the cytoplasm. The catalysed reaction is tRNA(Pro) + L-proline + ATP = L-prolyl-tRNA(Pro) + AMP + diphosphate. Its function is as follows. Catalyzes the attachment of proline to tRNA(Pro) in a two-step reaction: proline is first activated by ATP to form Pro-AMP and then transferred to the acceptor end of tRNA(Pro). In Phocaeicola vulgatus (strain ATCC 8482 / DSM 1447 / JCM 5826 / CCUG 4940 / NBRC 14291 / NCTC 11154) (Bacteroides vulgatus), this protein is Proline--tRNA ligase.